Consider the following 435-residue polypeptide: E3 ubiquitin-protein ligase PUB22 (435 aa).

Residues 6–81 (EIPSFFLCPI…QSWCTLNASY (76 aa)) form the U-box domain.

As to quaternary structure, interacts with RPN12A. Binds to EXO70B2. Post-translationally, auto-ubiquitinated leading to degradation via the 26S proteasome. This Auto-ubiquitination is repressed by the bacterial elicitor flg22 thus leading to a transiently increased protein stabilization and accumulation.

The protein localises to the cytoplasm. The enzyme catalyses S-ubiquitinyl-[E2 ubiquitin-conjugating enzyme]-L-cysteine + [acceptor protein]-L-lysine = [E2 ubiquitin-conjugating enzyme]-L-cysteine + N(6)-ubiquitinyl-[acceptor protein]-L-lysine.. The protein operates within protein modification; protein ubiquitination. Its function is as follows. E3 ubiquitin-protein ligase that negatively regulates water stress response. May control in coordination with PUB23 a drought signaling pathway by ubiquitinating cytosolic RPN12a. Acts as a negative regulator of the immunity triggered by the pathogen-associated molecular patterns (PAMPs), in association with PUB23 and PUB24. Regulates EXO70B2 ubiquitination and degradation via the 26S proteasome to attenuate PAMP-induced signaling. The sequence is that of E3 ubiquitin-protein ligase PUB22 from Arabidopsis thaliana (Mouse-ear cress).